We begin with the raw amino-acid sequence, 191 residues long: Ciliary microtubule-associated protein 3 (191 aa).

Interacts with proteins involved in ciliary transport, including ARL13B, CETN1, KIF3A, RAB6A, RAB8A, TUBB1 and TUBG1. Interacts with AURKA.

Its subcellular location is the cytoplasmic vesicle. The protein resides in the golgi apparatus. It is found in the trans-Golgi network. The protein localises to the cytoplasm. During primary cilia disassembly, involved in cilia disassembly. Required specifically to control cilia retraction as well as the liberation and duplication of the basal body/centrosome. May act by stimulating AURKA activity at the basal body in a cell cycle-dependent manner. The sequence is that of Ciliary microtubule-associated protein 3 from Homo sapiens (Human).